Reading from the N-terminus, the 186-residue chain is Adenine phosphoribosyltransferase (186 aa).

This sequence belongs to the purine/pyrimidine phosphoribosyltransferase family. As to quaternary structure, homodimer.

It is found in the cytoplasm. The catalysed reaction is AMP + diphosphate = 5-phospho-alpha-D-ribose 1-diphosphate + adenine. Its pathway is purine metabolism; AMP biosynthesis via salvage pathway; AMP from adenine: step 1/1. Its function is as follows. Catalyzes a salvage reaction resulting in the formation of AMP, that is energically less costly than de novo synthesis. The sequence is that of Adenine phosphoribosyltransferase from Xanthomonas euvesicatoria pv. vesicatoria (strain 85-10) (Xanthomonas campestris pv. vesicatoria).